The chain runs to 133 residues: Large-conductance mechanosensitive channel (133 aa).

The next 3 helical transmembrane spans lie at 8-28 (FAMKGNVVDLAVGVIIGGAFG), 30-50 (IVTSLVNDVIMPILGLILGGI), and 73-93 (GQFIQNILDFLIISFSIFLFI).

Belongs to the MscL family. Homopentamer.

The protein localises to the cell membrane. In terms of biological role, channel that opens in response to stretch forces in the membrane lipid bilayer. May participate in the regulation of osmotic pressure changes within the cell. This is Large-conductance mechanosensitive channel from Hathewaya histolytica (Clostridium histolyticum).